The chain runs to 212 residues: Nucleoside diphosphate kinase homolog 5 (212 aa).

The interval 13–145 is NDK; sequence EKTLAIIKPD…EREIRFMFPE (133 aa).

It belongs to the NDK family. Component of the axonemal radial spoke complex 1 (RS1), at least composed of spoke head proteins RSPH1, RSPH3, RSPH9 and the cilia-specific component RSPH4A or sperm-specific component RSPH6A, spoke stalk proteins RSPH14, DNAJB13, DYDC1, ROPN1L and NME5, and the anchor protein IQUB. Interacts with IQUB. As to expression, specifically expressed in testis germinal cells.

Its subcellular location is the cell projection. The protein localises to the cilium. It localises to the cytoplasm. The protein resides in the cytoskeleton. It is found in the flagellum axoneme. In terms of biological role, functions as part of axonemal radial spoke complexes that play an important part in the motility of sperm and cilia. Does not seem to have nucleoside diphosphate kinase (NDPK) activity. Confers protection from cell death by BAX and alters the cellular levels of several antioxidant enzymes including GPX5. May play a role in spermiogenesis by increasing the ability of late-stage spermatids to eliminate reactive oxygen species. Exhibits a 3'-5' exonuclease activity with a preference for single-stranded DNA, suggesting roles in DNA proofreading and repair. This chain is Nucleoside diphosphate kinase homolog 5, found in Homo sapiens (Human).